We begin with the raw amino-acid sequence, 462 residues long: Alanine racemase (462 aa).

The active-site Proton acceptor; specific for D-alanine is K34. The residue at position 34 (K34) is an N6-(pyridoxal phosphate)lysine. Residues A73 to L132 are unknown insert. R193 lines the substrate pocket. The region spanning D286–G332 is the RPE1 insert domain. The active-site Proton acceptor; specific for L-alanine is the Y357. Position 405 (M405) interacts with substrate.

The protein belongs to the alanine racemase family. Pyridoxal 5'-phosphate serves as cofactor.

It catalyses the reaction L-alanine = D-alanine. It participates in amino-acid biosynthesis; D-alanine biosynthesis; D-alanine from L-alanine: step 1/1. In terms of biological role, catalyzes the interconversion of L-alanine and D-alanine. May also act on other amino acids. This chain is Alanine racemase (alr), found in Rickettsia felis (strain ATCC VR-1525 / URRWXCal2) (Rickettsia azadi).